The primary structure comprises 378 residues: 23S rRNA (uracil(747)-C(5))-methyltransferase RlmC (378 aa).

Residues Cys-3, Cys-11, Cys-14, and Cys-87 each coordinate [4Fe-4S] cluster. Positions 212, 241, 262, and 309 each coordinate S-adenosyl-L-methionine. The active-site Nucleophile is Cys-336.

It belongs to the class I-like SAM-binding methyltransferase superfamily. RNA M5U methyltransferase family. RlmC subfamily.

The catalysed reaction is uridine(747) in 23S rRNA + S-adenosyl-L-methionine = 5-methyluridine(747) in 23S rRNA + S-adenosyl-L-homocysteine + H(+). In terms of biological role, catalyzes the formation of 5-methyl-uridine at position 747 (m5U747) in 23S rRNA. The polypeptide is 23S rRNA (uracil(747)-C(5))-methyltransferase RlmC (Shewanella pealeana (strain ATCC 700345 / ANG-SQ1)).